A 1755-amino-acid polypeptide reads, in one-letter code: Transposon Ty1-DR5 Gag-Pol polyprotein (1755 aa).

Polar residues-rich tracts occupy residues 1 to 10 (MESQQLSNYP), 48 to 60 (TKANSQQTTTPAS), and 127 to 152 (QSQFPQYPSSVGTPLSTPSPESGNTF). 3 disordered regions span residues 1–93 (MESQ…MMTQ), 126–173 (PQSQ…RPPP), and 352–421 (GSRN…SKST). Positions 153–165 (TDSSSADSDMTST) are enriched in low complexity. An RNA-binding region spans residues 299 to 401 (NNGIHINNKV…NSKSKTARAH (103 aa)). Residues 402-418 (NVSTSNNSPSTDNDSIS) show a composition bias toward low complexity. D461 functions as the For protease activity; shared with dimeric partner in the catalytic mechanism. Residues 583-640 (NVHTSESTRKYPYPFIHRMLAHANAQTIRYSLKNNTITYFNESDVDWSSAIDYQCPDC) are integrase-type zinc finger-like. The Integrase catalytic domain maps to 660-835 (NSYEPFQYLH…AGLDISTLLP (176 aa)). Mg(2+)-binding residues include D671 and D736. 3 disordered regions span residues 956–1087 (SKAV…ETEK), 1092–1111 (RSPSIDASPPENNSSHNIVP), and 1130–1187 (DLPL…DNET). The span at 960-969 (SPTDSTPPST) shows a compositional bias: low complexity. Over residues 1005 to 1015 (STPQISNIEST) the composition is skewed to polar residues. The span at 1038 to 1053 (ESSHASKSKDFRHSDS) shows a compositional bias: basic and acidic residues. Polar residues-rich tracts occupy residues 1054 to 1082 (YSENETNHTNVPISSTGGTNNKTVPQISD) and 1101 to 1111 (PENNSSHNIVP). Positions 1178–1212 (KKRSLEDNETEIKVSRDTWNTKNMRSLEPPRSKKR) match the Bipartite nuclear localization signal motif. The 139-residue stretch at 1338-1476 (NNYYITQLDI…DILGLEIKYQ (139 aa)) folds into the Reverse transcriptase Ty1/copia-type domain. The Mg(2+) site is built by D1346, D1427, D1428, D1610, E1652, and D1685. Residues 1610–1752 (DASYGNQPYY…IKTFKLLTNK (143 aa)) enclose the RNase H Ty1/copia-type domain.

In terms of assembly, the capsid protein forms a homotrimer, from which the VLPs are assembled. The protease is a homodimer, whose active site consists of two apposed aspartic acid residues. Post-translationally, initially, virus-like particles (VLPs) are composed of the structural unprocessed proteins Gag and Gag-Pol, and also contain the host initiator methionine tRNA (tRNA(i)-Met) which serves as a primer for minus-strand DNA synthesis, and a dimer of genomic Ty RNA. Processing of the polyproteins occurs within the particle and proceeds by an ordered pathway, called maturation. First, the protease (PR) is released by autocatalytic cleavage of the Gag-Pol polyprotein yielding capsid protein p45 and a Pol-p154 precursor protein. This cleavage is a prerequisite for subsequent processing of Pol-p154 at the remaining sites to release the mature structural and catalytic proteins. Maturation takes place prior to the RT reaction and is required to produce transposition-competent VLPs.

It localises to the cytoplasm. The protein resides in the nucleus. The catalysed reaction is DNA(n) + a 2'-deoxyribonucleoside 5'-triphosphate = DNA(n+1) + diphosphate. It carries out the reaction Endonucleolytic cleavage to 5'-phosphomonoester.. Its function is as follows. Capsid protein (CA) is the structural component of the virus-like particle (VLP), forming the shell that encapsulates the retrotransposons dimeric RNA genome. The particles are assembled from trimer-clustered units and there are holes in the capsid shells that allow for the diffusion of macromolecules. CA also has nucleocapsid-like chaperone activity, promoting primer tRNA(i)-Met annealing to the multipartite primer-binding site (PBS), dimerization of Ty1 RNA and initiation of reverse transcription. The aspartyl protease (PR) mediates the proteolytic cleavages of the Gag and Gag-Pol polyproteins after assembly of the VLP. In terms of biological role, reverse transcriptase/ribonuclease H (RT) is a multifunctional enzyme that catalyzes the conversion of the retro-elements RNA genome into dsDNA within the VLP. The enzyme displays a DNA polymerase activity that can copy either DNA or RNA templates, and a ribonuclease H (RNase H) activity that cleaves the RNA strand of RNA-DNA heteroduplexes during plus-strand synthesis and hydrolyzes RNA primers. The conversion leads to a linear dsDNA copy of the retrotransposon that includes long terminal repeats (LTRs) at both ends. Functionally, integrase (IN) targets the VLP to the nucleus, where a subparticle preintegration complex (PIC) containing at least integrase and the newly synthesized dsDNA copy of the retrotransposon must transit the nuclear membrane. Once in the nucleus, integrase performs the integration of the dsDNA into the host genome. This is Transposon Ty1-DR5 Gag-Pol polyprotein (TY1B-DR5) from Saccharomyces cerevisiae (strain ATCC 204508 / S288c) (Baker's yeast).